A 33-amino-acid polypeptide reads, in one-letter code: Cysteine-rich venom protein (33 aa).

A disordered region spans residues 1 to 33; that stretch reads NVDFNSESTRRKKKQKEIVDLHNSLRRRVSPTA. A compositionally biased stretch (basic residues) spans 24–33; the sequence is SLRRRVSPTA.

Belongs to the CRISP family. Post-translationally, contains 8 disulfide bonds. As to expression, expressed by the venom gland.

The protein localises to the secreted. Its function is as follows. Blocks contraction of smooth muscle elicited by high potassium-induced depolarization, but does not block caffeine-stimulated contraction. May target voltage-gated calcium channels on smooth muscle (Cav). This chain is Cysteine-rich venom protein, found in Naja naja (Indian cobra).